The sequence spans 224 residues: MAETAPVAAPDVAAAPTPAKAAPAKKPKKAAGGAKARKPAGPSVTELITKAVSASKERKGLSLAALKKALAAGGYDVEKSNSRIKLGLKSLVSKGTLVQTKGTGASGSFRLSKKSGDVKEKAPKKKTPAAKPKKPAAKKPAAAAKKPKKAVAVKKSPKKAKKPAAAATKKAAKSPKKVTKAAKPKKAVAVKSPAKAKAVKPKAAKPKATKPKAAKAKKAAPKKK.

Low complexity-rich tracts occupy residues 1 to 22 and 30 to 42; these read MAETAPVAAPDVAAAPTPAKAA and AAGGAKARKPAGP. 2 disordered regions span residues 1-43 and 99-224; these read MAET…AGPS and QTKG…PKKK. One can recognise an H15 domain in the interval 40 to 113; sequence AGPSVTELIT…GASGSFRLSK (74 aa). Basic residues-rich tracts occupy residues 122–137, 145–162, 170–188, and 197–224; these read APKKKTPAAKPKKPAA, KKPKKAVAVKKSPKKAKK, KAAKSPKKVTKAAKPKKAV, and KAVKPKAAKPKATKPKAAKAKKAAPKKK.

This sequence belongs to the histone H1/H5 family.

It localises to the nucleus. Its subcellular location is the chromosome. Its function is as follows. Histones H1 are necessary for the condensation of nucleosome chains into higher-order structures. This chain is Histone H1.03, found in Gallus gallus (Chicken).